The primary structure comprises 461 residues: uncharacterized protein (461 aa).

LRR repeat units lie at residues 119–140, 141–162, and 163–184; these read NVKK…EKMS, LLEV…QHCK, and NLKE…EYLK. The region spanning 197-237 is the LRRCT domain; that stretch reads NPCVGEGGQEYRRKVIRVLPNLTKLDDKPVTTTDHQEAIED.

This is an uncharacterized protein from Caenorhabditis elegans.